The following is a 159-amino-acid chain: Ribosomal RNA large subunit methyltransferase H (159 aa).

S-adenosyl-L-methionine contacts are provided by Leu76 and Gly108.

This sequence belongs to the RNA methyltransferase RlmH family. In terms of assembly, homodimer.

Its subcellular location is the cytoplasm. The enzyme catalyses pseudouridine(1915) in 23S rRNA + S-adenosyl-L-methionine = N(3)-methylpseudouridine(1915) in 23S rRNA + S-adenosyl-L-homocysteine + H(+). Its function is as follows. Specifically methylates the pseudouridine at position 1915 (m3Psi1915) in 23S rRNA. This chain is Ribosomal RNA large subunit methyltransferase H, found in Natranaerobius thermophilus (strain ATCC BAA-1301 / DSM 18059 / JW/NM-WN-LF).